The chain runs to 466 residues: Asparagine--tRNA ligase (466 aa).

This sequence belongs to the class-II aminoacyl-tRNA synthetase family. In terms of assembly, homodimer.

It is found in the cytoplasm. It catalyses the reaction tRNA(Asn) + L-asparagine + ATP = L-asparaginyl-tRNA(Asn) + AMP + diphosphate + H(+). The chain is Asparagine--tRNA ligase from Salmonella choleraesuis (strain SC-B67).